A 280-amino-acid polypeptide reads, in one-letter code: Octanoyltransferase LIP2p2, chloroplastic (280 aa).

The transit peptide at 1 to 34 (MVFSVATSSVTNPKLHHHHHLSDFNRNRVSTSLK) directs the protein to the chloroplast. The BPL/LPL catalytic domain occupies 81 to 270 (QECSDSLIIL…EFSEVFQLQM (190 aa)). Substrate-binding positions include 123–130 (RGGEVTYH), 191–193 (AIG), and 204–206 (GLA). Cysteine 222 serves as the catalytic Acyl-thioester intermediate.

It belongs to the LipB family. Expressed in roots, leaves, cauline leaves, stems, siliques and flowers.

The protein localises to the plastid. The protein resides in the chloroplast. It carries out the reaction octanoyl-[ACP] + L-lysyl-[protein] = N(6)-octanoyl-L-lysyl-[protein] + holo-[ACP] + H(+). It participates in protein modification; protein lipoylation via endogenous pathway; protein N(6)-(lipoyl)lysine from octanoyl-[acyl-carrier-protein]: step 1/2. Its function is as follows. Catalyzes the transfer of endogenously produced octanoic acid from octanoyl-acyl-carrier-protein onto the lipoyl domains of lipoate-dependent enzymes. Lipoyl-ACP can also act as a substrate although octanoyl-ACP is likely to be the physiological substrate. Together with LIP1P is essential for de novo plastidial protein lipoylation during seed development. Acts redundantly with LIP2P. The protein is Octanoyltransferase LIP2p2, chloroplastic of Arabidopsis thaliana (Mouse-ear cress).